The primary structure comprises 643 residues: Melanoma-associated antigen C3 (643 aa).

MAGE domains lie at 184–384 (LDEK…AAGM) and 456–643 (LDEK…FCPE). A disordered region spans residues 347-421 (NPQGLAGHRQ…PQSPLDSCSS (75 aa)). A compositionally biased stretch (basic and acidic residues) spans 354–363 (HRQEDGRRGL). The segment covering 383–414 (GMPPLPQSPPEIPPQGPPKISPQGPPQSPPQS) has biased composition (pro residues). Phosphothreonine occurs at positions 478, 484, and 485.

In terms of tissue distribution, expressed in testis. Not expressed in other normal tissues, but is expressed in tumors of different histological origins.

This is Melanoma-associated antigen C3 (MAGEC3) from Homo sapiens (Human).